Reading from the N-terminus, the 227-residue chain is Cytochrome c oxidase subunit 2 (227 aa).

Topologically, residues 1–14 (MAYPFQLGLQDATS) are mitochondrial intermembrane. A helical transmembrane segment spans residues 15-45 (PIMEELLHFHDHALMIVFLISSLVLYIISLM). Residues 46 to 59 (LTTKLTHTSTMDAQ) are Mitochondrial matrix-facing. The helical transmembrane segment at 60 to 87 (EVETVWTILPAIILILIALPSLRILYMM) threads the bilayer. The Mitochondrial intermembrane portion of the chain corresponds to 88–227 (DEINNPSLTV…YFETWSALMV (140 aa)). Cu cation is bound by residues H161, C196, E198, C200, H204, and M207. Residue E198 coordinates Mg(2+). Y218 is modified (phosphotyrosine).

The protein belongs to the cytochrome c oxidase subunit 2 family. In terms of assembly, component of the cytochrome c oxidase (complex IV, CIV), a multisubunit enzyme composed of 14 subunits. The complex is composed of a catalytic core of 3 subunits MT-CO1, MT-CO2 and MT-CO3, encoded in the mitochondrial DNA, and 11 supernumerary subunits COX4I, COX5A, COX5B, COX6A, COX6B, COX6C, COX7A, COX7B, COX7C, COX8 and NDUFA4, which are encoded in the nuclear genome. The complex exists as a monomer or a dimer and forms supercomplexes (SCs) in the inner mitochondrial membrane with NADH-ubiquinone oxidoreductase (complex I, CI) and ubiquinol-cytochrome c oxidoreductase (cytochrome b-c1 complex, complex III, CIII), resulting in different assemblies (supercomplex SCI(1)III(2)IV(1) and megacomplex MCI(2)III(2)IV(2)). Found in a complex with TMEM177, COA6, COX18, COX20, SCO1 and SCO2. Interacts with TMEM177 in a COX20-dependent manner. Interacts with COX20. Interacts with COX16. Requires Cu cation as cofactor.

It localises to the mitochondrion inner membrane. The catalysed reaction is 4 Fe(II)-[cytochrome c] + O2 + 8 H(+)(in) = 4 Fe(III)-[cytochrome c] + 2 H2O + 4 H(+)(out). Its function is as follows. Component of the cytochrome c oxidase, the last enzyme in the mitochondrial electron transport chain which drives oxidative phosphorylation. The respiratory chain contains 3 multisubunit complexes succinate dehydrogenase (complex II, CII), ubiquinol-cytochrome c oxidoreductase (cytochrome b-c1 complex, complex III, CIII) and cytochrome c oxidase (complex IV, CIV), that cooperate to transfer electrons derived from NADH and succinate to molecular oxygen, creating an electrochemical gradient over the inner membrane that drives transmembrane transport and the ATP synthase. Cytochrome c oxidase is the component of the respiratory chain that catalyzes the reduction of oxygen to water. Electrons originating from reduced cytochrome c in the intermembrane space (IMS) are transferred via the dinuclear copper A center (CU(A)) of subunit 2 and heme A of subunit 1 to the active site in subunit 1, a binuclear center (BNC) formed by heme A3 and copper B (CU(B)). The BNC reduces molecular oxygen to 2 water molecules using 4 electrons from cytochrome c in the IMS and 4 protons from the mitochondrial matrix. In Canis aureus (Golden jackal), this protein is Cytochrome c oxidase subunit 2 (MT-CO2).